The chain runs to 377 residues: Endolytic peptidoglycan transglycosylase RlpA (377 aa).

An N-terminal signal peptide occupies residues 1-19; it reads MHKQLPVICVAAGIVLLAA. Cys-20 is lipidated: N-palmitoyl cysteine. A lipid anchor (S-diacylglycerol cysteine) is attached at Cys-20. Residues 196–277 form a disordered region; sequence LPPRPDLSGG…PVSAPVTAPA (82 aa). Low complexity-rich tracts occupy residues 208 to 218 and 264 to 277; these read SASSAPAQPQG and PQTA…TAPA. One can recognise an SPOR domain in the interval 300 to 376; sequence AAASGRFVVQ…AQLQSFIASA (77 aa).

This sequence belongs to the RlpA family.

It localises to the cell membrane. Lytic transglycosylase with a strong preference for naked glycan strands that lack stem peptides. This is Endolytic peptidoglycan transglycosylase RlpA from Salmonella typhi.